Reading from the N-terminus, the 331-residue chain is Glycerol-3-phosphate dehydrogenase [NAD(P)+] (331 aa).

NADPH contacts are provided by Trp-11, Arg-30, and Lys-105. Sn-glycerol 3-phosphate is bound by residues Lys-105, Gly-134, and Ser-136. Residue Ala-138 coordinates NADPH. The sn-glycerol 3-phosphate site is built by Lys-189, Asp-242, Ser-252, Arg-253, and Asn-254. Catalysis depends on Lys-189, which acts as the Proton acceptor. Position 253 (Arg-253) interacts with NADPH. The NADPH site is built by Val-277 and Glu-279.

The protein belongs to the NAD-dependent glycerol-3-phosphate dehydrogenase family.

It is found in the cytoplasm. It catalyses the reaction sn-glycerol 3-phosphate + NAD(+) = dihydroxyacetone phosphate + NADH + H(+). It carries out the reaction sn-glycerol 3-phosphate + NADP(+) = dihydroxyacetone phosphate + NADPH + H(+). It participates in membrane lipid metabolism; glycerophospholipid metabolism. In terms of biological role, catalyzes the reduction of the glycolytic intermediate dihydroxyacetone phosphate (DHAP) to sn-glycerol 3-phosphate (G3P), the key precursor for phospholipid synthesis. The sequence is that of Glycerol-3-phosphate dehydrogenase [NAD(P)+] from Janthinobacterium sp. (strain Marseille) (Minibacterium massiliensis).